Here is an 88-residue protein sequence, read N- to C-terminus: Small ribosomal subunit protein uS15c (88 aa).

The protein belongs to the universal ribosomal protein uS15 family. In terms of assembly, part of the 30S ribosomal subunit.

Its subcellular location is the plastid. The protein resides in the chloroplast. In Barbarea verna (Land cress), this protein is Small ribosomal subunit protein uS15c (rps15).